A 235-amino-acid chain; its full sequence is Small ribosomal subunit protein uS5 (235 aa).

Positions 60–123 (ENQEVLDIAL…NYAKMNIIEI (64 aa)) constitute an S5 DRBM domain. Positions 127, 132, 134, and 138 each coordinate Zn(2+).

This sequence belongs to the universal ribosomal protein uS5 family. As to quaternary structure, part of the 30S ribosomal subunit. Contacts protein S4. Zn(2+) is required as a cofactor.

Functionally, with S4 and S12 plays an important role in translational accuracy. This is Small ribosomal subunit protein uS5 from Thermococcus kodakarensis (strain ATCC BAA-918 / JCM 12380 / KOD1) (Pyrococcus kodakaraensis (strain KOD1)).